We begin with the raw amino-acid sequence, 242 residues long: MSHFEILSLEGLRNDGRRWDEMRNFQCRIGIEPSENGSAFIELGNTKVLCIVDGPSEPVIKSKARADRTFVNVEINIASFSTIDVKKRFKSDRRIQLQCLALQNTFEEIIQTELYPRSQISVYLHVLQDDGAVMASCINATTLALIDAGIPVKDFVCCSTAGIVESDMLLDLNSLEESALSWLTVAVLGNIKKVVYMQLETSMHLDYLESVMNMAIAGSEHIYNTMQSAVRQSAKPALASLS.

The protein belongs to the RNase PH family. As to quaternary structure, component of the RNA exosome complex. Specifically part of the catalytically inactive RNA exosome core complex (Exo-9) which may associate with the catalytic subunits rrp6 and dis3 in cytoplasmic- and nuclear-specific RNA exosome complex forms. Exo-9 is formed by a hexameric base ring of RNase PH domain-containing subunits and a cap ring consisting of csl4, rrp4 and rrp40.

The protein resides in the cytoplasm. It localises to the nucleus. Its subcellular location is the nucleolus. Non-catalytic component of the RNA exosome complex which has 3'-&gt;5' exoribonuclease activity and participates in a multitude of cellular RNA processing and degradation events. In the nucleus, the RNA exosome complex is involved in proper maturation of stable RNA species such as rRNA, snRNA and snoRNA, in the elimination of RNA processing by-products and non-coding 'pervasive' transcripts, such as antisense RNA species and cryptic unstable transcripts (CUTs), and of mRNAs with processing defects, thereby limiting or excluding their export to the cytoplasm. In the cytoplasm, the RNA exosome complex is involved in general mRNA turnover and in RNA surveillance pathways, preventing translation of aberrant mRNAs. The catalytic inactive RNA exosome core complex of 9 subunits (Exo-9) is proposed to play a pivotal role in the binding and presentation of RNA for ribonucleolysis, and to serve as a scaffold for the association with catalytic subunits and accessory proteins or complexes. ski6 is part of the hexameric ring of RNase PH domain-containing subunits proposed to form a central channel which threads RNA substrates for degradation. This chain is Exosome complex component ski6 (ski6), found in Schizosaccharomyces pombe (strain 972 / ATCC 24843) (Fission yeast).